Consider the following 427-residue polypeptide: MTWFIDRRLNGKNKSAVNRQRFLRRYKAQIKQSISEAINKRSVTDIESGESVSIPTDDINEPMFHQGRGGLRNRVHPGNDHFVQNDRIERPQGGGGGGGSGQGQASADGEGKDEFVFQISKDEYLDLLFEDLALPNLKKNQHRQLNEFKTHRAGFTSNGVPANISVVRSLQNSLARRTAMTAGKRRELRALEEDLEAISRSEPVQLLEEERLRKEIAELRAKIERVPFIDTFDLRYKNYEKRPEPSSQAVMFCLMDVSGSMDQATKDMAKRFYILLYLFLSRTYKNVDVVYIRHHTQAKEVDEHEFFYSQETGGTIVSSALKLMDEVVQARYDPAQWNIYAAQASDGDNWADDSPLCHELLAKKILPVVRYYSYIEITRRAHQTLWREYEHLQATFDNFAMQHIRDQEDIYPVFRELFHKQSSKSEA.

A disordered region spans residues 72–109 (RNRVHPGNDHFVQNDRIERPQGGGGGGGSGQGQASADG). A compositionally biased stretch (basic and acidic residues) spans 77–90 (PGNDHFVQNDRIER). Gly residues predominate over residues 92–102 (QGGGGGGGSGQ).

It belongs to the UPF0229 family.

In Klebsiella pneumoniae subsp. pneumoniae (strain ATCC 700721 / MGH 78578), this protein is UPF0229 protein KPN78578_11640.